The primary structure comprises 373 residues: Deoxyguanosinetriphosphate triphosphohydrolase-like protein 1 (373 aa).

Positions 21–43 (RSSEARRAVPEAPSETRTAYQKD) are disordered. Residues 76–198 (RLTHTLEVQQ…VDAADALAYT (123 aa)) form the HD domain.

This sequence belongs to the dGTPase family. Type 2 subfamily.

The chain is Deoxyguanosinetriphosphate triphosphohydrolase-like protein 1 from Deinococcus radiodurans (strain ATCC 13939 / DSM 20539 / JCM 16871 / CCUG 27074 / LMG 4051 / NBRC 15346 / NCIMB 9279 / VKM B-1422 / R1).